The primary structure comprises 284 residues: Putative cysteine-rich repeat secretory protein 7 (284 aa).

The signal sequence occupies residues 1–24 (MARIILTAPLFYFFFSLLSHQTMS). Gnk2-homologous domains follow at residues 26 to 128 (PQHM…NVSF) and 134 to 244 (SKPV…TFVL). The interval 247 to 284 (PAPSPSSLPPISPTSSPPLSLPPQLPPPLSQPPPPLST) is disordered.

This sequence belongs to the cysteine-rich repeat secretory protein family.

The protein localises to the secreted. The chain is Putative cysteine-rich repeat secretory protein 7 (CRRSP7) from Arabidopsis thaliana (Mouse-ear cress).